A 379-amino-acid chain; its full sequence is Anhydro-N-acetylmuramic acid kinase (379 aa).

Glycine 12 to aspartate 19 provides a ligand contact to ATP.

The protein belongs to the anhydro-N-acetylmuramic acid kinase family.

It carries out the reaction 1,6-anhydro-N-acetyl-beta-muramate + ATP + H2O = N-acetyl-D-muramate 6-phosphate + ADP + H(+). It participates in amino-sugar metabolism; 1,6-anhydro-N-acetylmuramate degradation. The protein operates within cell wall biogenesis; peptidoglycan recycling. Catalyzes the specific phosphorylation of 1,6-anhydro-N-acetylmuramic acid (anhMurNAc) with the simultaneous cleavage of the 1,6-anhydro ring, generating MurNAc-6-P. Is required for the utilization of anhMurNAc either imported from the medium or derived from its own cell wall murein, and thus plays a role in cell wall recycling. The chain is Anhydro-N-acetylmuramic acid kinase from Gloeobacter violaceus (strain ATCC 29082 / PCC 7421).